The following is a 304-amino-acid chain: Homoserine O-acetyltransferase (304 aa).

The active-site Acyl-thioester intermediate is cysteine 142. Positions 163 and 191 each coordinate substrate. The Proton acceptor role is filled by histidine 234. Glutamate 236 is an active-site residue. Residue arginine 248 participates in substrate binding.

This sequence belongs to the MetA family.

The protein localises to the cytoplasm. It carries out the reaction L-homoserine + acetyl-CoA = O-acetyl-L-homoserine + CoA. It functions in the pathway amino-acid biosynthesis; L-methionine biosynthesis via de novo pathway; O-acetyl-L-homoserine from L-homoserine: step 1/1. Functionally, transfers an acetyl group from acetyl-CoA to L-homoserine, forming acetyl-L-homoserine. The protein is Homoserine O-acetyltransferase of Thermotoga petrophila (strain ATCC BAA-488 / DSM 13995 / JCM 10881 / RKU-1).